We begin with the raw amino-acid sequence, 346 residues long: Aspartate-semialdehyde dehydrogenase (346 aa).

NADP(+)-binding positions include 13-16 and 41-42; these read TGAV and RS. Ser-98 carries the phosphoserine modification. Arg-101 is a phosphate binding site. The active-site Acyl-thioester intermediate is Cys-130. Position 146 is a phosphotyrosine (Tyr-146). Substrate is bound at residue Gln-157. 160 to 161 lines the NADP(+) pocket; the sequence is SG. A phosphate-binding site is contributed by Lys-221. Arg-243 is a binding site for substrate. The active-site Proton acceptor is the His-250. Residue Asn-324 coordinates NADP(+).

This sequence belongs to the aspartate-semialdehyde dehydrogenase family. Homodimer.

The enzyme catalyses L-aspartate 4-semialdehyde + phosphate + NADP(+) = 4-phospho-L-aspartate + NADPH + H(+). The protein operates within amino-acid biosynthesis; L-lysine biosynthesis via DAP pathway; (S)-tetrahydrodipicolinate from L-aspartate: step 2/4. Its pathway is amino-acid biosynthesis; L-methionine biosynthesis via de novo pathway; L-homoserine from L-aspartate: step 2/3. It functions in the pathway amino-acid biosynthesis; L-threonine biosynthesis; L-threonine from L-aspartate: step 2/5. Functionally, catalyzes the NADPH-dependent formation of L-aspartate-semialdehyde (L-ASA) by the reductive dephosphorylation of L-aspartyl-4-phosphate. This Bacillus subtilis (strain 168) protein is Aspartate-semialdehyde dehydrogenase.